The chain runs to 251 residues: Imidazole glycerol phosphate synthase subunit HisF (251 aa).

Residues Asp11 and Asp130 contribute to the active site.

This sequence belongs to the HisA/HisF family. In terms of assembly, heterodimer of HisH and HisF.

The protein localises to the cytoplasm. The catalysed reaction is 5-[(5-phospho-1-deoxy-D-ribulos-1-ylimino)methylamino]-1-(5-phospho-beta-D-ribosyl)imidazole-4-carboxamide + L-glutamine = D-erythro-1-(imidazol-4-yl)glycerol 3-phosphate + 5-amino-1-(5-phospho-beta-D-ribosyl)imidazole-4-carboxamide + L-glutamate + H(+). The protein operates within amino-acid biosynthesis; L-histidine biosynthesis; L-histidine from 5-phospho-alpha-D-ribose 1-diphosphate: step 5/9. Its function is as follows. IGPS catalyzes the conversion of PRFAR and glutamine to IGP, AICAR and glutamate. The HisF subunit catalyzes the cyclization activity that produces IGP and AICAR from PRFAR using the ammonia provided by the HisH subunit. The chain is Imidazole glycerol phosphate synthase subunit HisF from Flavobacterium johnsoniae (strain ATCC 17061 / DSM 2064 / JCM 8514 / BCRC 14874 / CCUG 350202 / NBRC 14942 / NCIMB 11054 / UW101) (Cytophaga johnsonae).